The chain runs to 433 residues: UDP-N-acetylglucosamine 1-carboxyvinyltransferase 2 (433 aa).

23 to 24 (KN) is a binding site for phosphoenolpyruvate. Arg96 lines the UDP-N-acetyl-alpha-D-glucosamine pocket. The Proton donor role is filled by Cys120. A 2-(S-cysteinyl)pyruvic acid O-phosphothioketal modification is found at Cys120. UDP-N-acetyl-alpha-D-glucosamine contacts are provided by residues 125–129 (RPIDL), Asp308, and Val330.

The protein belongs to the EPSP synthase family. MurA subfamily.

It localises to the cytoplasm. It carries out the reaction phosphoenolpyruvate + UDP-N-acetyl-alpha-D-glucosamine = UDP-N-acetyl-3-O-(1-carboxyvinyl)-alpha-D-glucosamine + phosphate. The protein operates within cell wall biogenesis; peptidoglycan biosynthesis. Cell wall formation. Adds enolpyruvyl to UDP-N-acetylglucosamine. This Enterococcus faecalis (strain ATCC 700802 / V583) protein is UDP-N-acetylglucosamine 1-carboxyvinyltransferase 2.